Reading from the N-terminus, the 101-residue chain is NAD(P)H-quinone oxidoreductase subunit 4L, chloroplastic (101 aa).

3 helical membrane passes run 2 to 22 (MFEL…YGLI), 32 to 52 (ICLE…SDLF), and 61 to 81 (IFAI…LSIL).

It belongs to the complex I subunit 4L family. NDH is composed of at least 16 different subunits, 5 of which are encoded in the nucleus.

Its subcellular location is the plastid. It is found in the chloroplast thylakoid membrane. The catalysed reaction is a plastoquinone + NADH + (n+1) H(+)(in) = a plastoquinol + NAD(+) + n H(+)(out). It catalyses the reaction a plastoquinone + NADPH + (n+1) H(+)(in) = a plastoquinol + NADP(+) + n H(+)(out). NDH shuttles electrons from NAD(P)H:plastoquinone, via FMN and iron-sulfur (Fe-S) centers, to quinones in the photosynthetic chain and possibly in a chloroplast respiratory chain. The immediate electron acceptor for the enzyme in this species is believed to be plastoquinone. Couples the redox reaction to proton translocation, and thus conserves the redox energy in a proton gradient. This Lolium perenne (Perennial ryegrass) protein is NAD(P)H-quinone oxidoreductase subunit 4L, chloroplastic.